We begin with the raw amino-acid sequence, 227 residues long: UPF0758 protein lpg2489 (227 aa).

The MPN domain occupies 102–225 (RLSNTQQTYA…YSIFAENKWV (124 aa)). Positions 173, 175, and 186 each coordinate Zn(2+). Positions 173–186 (HNHPSGLSDASQQD) match the JAMM motif motif.

It belongs to the UPF0758 family.

This is UPF0758 protein lpg2489 from Legionella pneumophila subsp. pneumophila (strain Philadelphia 1 / ATCC 33152 / DSM 7513).